The following is a 297-amino-acid chain: Pyridoxal 5'-phosphate synthase subunit PdxS (297 aa).

Asp27 contributes to the D-ribose 5-phosphate binding site. The active-site Schiff-base intermediate with D-ribose 5-phosphate is the Lys84. Gly156 serves as a coordination point for D-ribose 5-phosphate. Arg168 is a D-glyceraldehyde 3-phosphate binding site. Residues Gly217 and Gly238–Ser239 contribute to the D-ribose 5-phosphate site.

The protein belongs to the PdxS/SNZ family. As to quaternary structure, in the presence of PdxT, forms a dodecamer of heterodimers.

The enzyme catalyses aldehydo-D-ribose 5-phosphate + D-glyceraldehyde 3-phosphate + L-glutamine = pyridoxal 5'-phosphate + L-glutamate + phosphate + 3 H2O + H(+). Its pathway is cofactor biosynthesis; pyridoxal 5'-phosphate biosynthesis. In terms of biological role, catalyzes the formation of pyridoxal 5'-phosphate from ribose 5-phosphate (RBP), glyceraldehyde 3-phosphate (G3P) and ammonia. The ammonia is provided by the PdxT subunit. Can also use ribulose 5-phosphate and dihydroxyacetone phosphate as substrates, resulting from enzyme-catalyzed isomerization of RBP and G3P, respectively. This Corynebacterium diphtheriae (strain ATCC 700971 / NCTC 13129 / Biotype gravis) protein is Pyridoxal 5'-phosphate synthase subunit PdxS.